The sequence spans 854 residues: Probable inorganic carbon transporter subunit DabA (854 aa).

Residues Cys-378, Asp-380, His-560, and Cys-575 each coordinate Zn(2+).

This sequence belongs to the inorganic carbon transporter (TC 9.A.2) DabA family. Forms a complex with DabB. Zn(2+) is required as a cofactor.

It is found in the cell membrane. Functionally, part of an energy-coupled inorganic carbon pump. The protein is Probable inorganic carbon transporter subunit DabA of Bacillus cereus (strain ATCC 14579 / DSM 31 / CCUG 7414 / JCM 2152 / NBRC 15305 / NCIMB 9373 / NCTC 2599 / NRRL B-3711).